A 281-amino-acid chain; its full sequence is Phosphoglycerate mutase-like protein AT74H (281 aa).

The active-site Tele-phosphohistidine intermediate is His17. Glu109 serves as the catalytic Proton donor/acceptor.

This sequence belongs to the phosphoglycerate mutase family.

Its function is as follows. May play a role in carbohydrates metabolism. This Arabidopsis thaliana (Mouse-ear cress) protein is Phosphoglycerate mutase-like protein AT74H.